A 258-amino-acid polypeptide reads, in one-letter code: 3-deoxy-manno-octulosonate cytidylyltransferase (258 aa).

Belongs to the KdsB family.

It is found in the cytoplasm. The enzyme catalyses 3-deoxy-alpha-D-manno-oct-2-ulosonate + CTP = CMP-3-deoxy-beta-D-manno-octulosonate + diphosphate. The protein operates within nucleotide-sugar biosynthesis; CMP-3-deoxy-D-manno-octulosonate biosynthesis; CMP-3-deoxy-D-manno-octulosonate from 3-deoxy-D-manno-octulosonate and CTP: step 1/1. It participates in bacterial outer membrane biogenesis; lipopolysaccharide biosynthesis. Activates KDO (a required 8-carbon sugar) for incorporation into bacterial lipopolysaccharide in Gram-negative bacteria. This is 3-deoxy-manno-octulosonate cytidylyltransferase from Pasteurella multocida (strain Pm70).